The following is a 132-amino-acid chain: UPF0299 membrane protein YohJ (132 aa).

Over 1-6 the chain is Periplasmic; it reads MSKTLN. The helical transmembrane segment at 7–27 threads the bilayer; sequence IIWQYLRAFVLIYACLYAGIF. Over 28-30 the chain is Cytoplasmic; sequence IAS. Residues 31–51 form a helical membrane-spanning segment; that stretch reads LLPVTIPGSIIGMLILFVLLA. Over 52–62 the chain is Periplasmic; the sequence is LQILPAKWVNP. Residues 63–83 traverse the membrane as a helical segment; that stretch reads GCYVLIRYMALLFVPIGVGVM. Over 84-92 the chain is Cytoplasmic; it reads QYFDLLRAQ. A helical membrane pass occupies residues 93–113; it reads FGPVVVSCAISTLVVFLVVSW. At 114-132 the chain is on the periplasmic side; sequence SSQLVHGERKVVGQKGSEE.

Belongs to the UPF0299 family.

It is found in the cell inner membrane. The sequence is that of UPF0299 membrane protein YohJ (yohJ) from Escherichia coli O157:H7.